The following is a 685-amino-acid chain: Polyphosphate kinase (685 aa).

Residue Asn45 coordinates ATP. Arg375 and Arg405 together coordinate Mg(2+). The active-site Phosphohistidine intermediate is His435. The ATP site is built by Tyr468, Arg564, and His592.

Belongs to the polyphosphate kinase 1 (PPK1) family. Mg(2+) is required as a cofactor. Post-translationally, an intermediate of this reaction is the autophosphorylated ppk in which a phosphate is covalently linked to a histidine residue through a N-P bond.

It carries out the reaction [phosphate](n) + ATP = [phosphate](n+1) + ADP. Catalyzes the reversible transfer of the terminal phosphate of ATP to form a long-chain polyphosphate (polyP). The chain is Polyphosphate kinase from Neisseria gonorrhoeae (strain ATCC 700825 / FA 1090).